The sequence spans 449 residues: D-inositol 3-phosphate glycosyltransferase (449 aa).

His43 serves as a coordination point for 1D-myo-inositol 3-phosphate. Residues 49 to 50 (QP) and Gly57 contribute to the UDP-N-acetyl-alpha-D-glucosamine site. 1D-myo-inositol 3-phosphate contacts are provided by residues 54–59 (DAGGMN), Lys112, Tyr145, Thr169, and Arg189. UDP-N-acetyl-alpha-D-glucosamine contacts are provided by Arg263, Lys268, and Gln324. 3 residues coordinate Mg(2+): Tyr333, Arg334, and Ala336. Positions 346 and 354 each coordinate UDP-N-acetyl-alpha-D-glucosamine. Thr360 provides a ligand contact to Mg(2+).

Belongs to the glycosyltransferase group 1 family. MshA subfamily. Homodimer.

It carries out the reaction 1D-myo-inositol 3-phosphate + UDP-N-acetyl-alpha-D-glucosamine = 1D-myo-inositol 2-acetamido-2-deoxy-alpha-D-glucopyranoside 3-phosphate + UDP + H(+). Its function is as follows. Catalyzes the transfer of a N-acetyl-glucosamine moiety to 1D-myo-inositol 3-phosphate to produce 1D-myo-inositol 2-acetamido-2-deoxy-glucopyranoside 3-phosphate in the mycothiol biosynthesis pathway. The protein is D-inositol 3-phosphate glycosyltransferase of Segniliparus rotundus (strain ATCC BAA-972 / CDC 1076 / CIP 108378 / DSM 44985 / JCM 13578).